Here is a 596-residue protein sequence, read N- to C-terminus: Leucine-rich repeat and IQ domain-containing protein 4 (596 aa).

22 LRR repeats span residues 22–44 (LPRL…LLRQ), 59–83 (LTDR…ILAL), 84–106 (KELE…IQQL), 108–129 (NTKV…LGAL), 130–152 (SSLE…VVSR), 153–176 (LRTL…ICKS), 177–200 (LHHL…IVNQ), 202–223 (KLRE…LCVL), 224–246 (YNLE…IGHL), 248–269 (RLQK…LSQC), 270–293 (SKLS…ELLT), 295–315 (LTEV…LCSW), 317–337 (SLHL…SFKR), 338–361 (LINL…ICAL), 362–384 (KNLE…ISLL), 385–407 (SNLK…IFSL), 410–433 (LEKL…IKRL), 434–457 (MNLK…GLMP), 459–479 (LEVL…ICRT), 480–502 (RNLR…LDHL), 504–525 (NLKV…VCNQ), and 527–549 (NEAI…TIQA). Residues 540–569 (RKMMATTIQAWWRGIMVRKGYGSYEELLKA) form the IQ domain. Positions 569 to 587 (ARKKGKSPPKDKKGKKAAK) are enriched in basic residues. Positions 569-596 (ARKKGKSPPKDKKGKKAAKGKPEKGNKK) are disordered.

This is Leucine-rich repeat and IQ domain-containing protein 4 (Lrriq4) from Mus musculus (Mouse).